We begin with the raw amino-acid sequence, 84 residues long: Small ribosomal subunit protein uS17 (84 aa).

This sequence belongs to the universal ribosomal protein uS17 family. Part of the 30S ribosomal subunit.

Its function is as follows. One of the primary rRNA binding proteins, it binds specifically to the 5'-end of 16S ribosomal RNA. This chain is Small ribosomal subunit protein uS17, found in Alkaliphilus metalliredigens (strain QYMF).